A 258-amino-acid polypeptide reads, in one-letter code: Indole-3-glycerol phosphate synthase (258 aa).

It belongs to the TrpC family.

The enzyme catalyses 1-(2-carboxyphenylamino)-1-deoxy-D-ribulose 5-phosphate + H(+) = (1S,2R)-1-C-(indol-3-yl)glycerol 3-phosphate + CO2 + H2O. It participates in amino-acid biosynthesis; L-tryptophan biosynthesis; L-tryptophan from chorismate: step 4/5. This is Indole-3-glycerol phosphate synthase from Geobacillus sp. (strain WCH70).